A 463-amino-acid chain; its full sequence is Argininosuccinate lyase (463 aa).

The protein belongs to the lyase 1 family. Argininosuccinate lyase subfamily.

The protein resides in the cytoplasm. It carries out the reaction 2-(N(omega)-L-arginino)succinate = fumarate + L-arginine. It participates in amino-acid biosynthesis; L-arginine biosynthesis; L-arginine from L-ornithine and carbamoyl phosphate: step 3/3. The polypeptide is Argininosuccinate lyase (Dinoroseobacter shibae (strain DSM 16493 / NCIMB 14021 / DFL 12)).